Consider the following 115-residue polypeptide: Colicin-Ib immunity protein (115 aa).

Transmembrane regions (helical) follow at residues 7 to 27, 38 to 58, and 87 to 107; these read VKYL…FYLG, FYAF…MRII, and IFEL…LIFI.

The protein localises to the cell membrane. Functionally, this protein is able to protect a cell, which harbors the plasmid IncI1 ColIb-P9 encoding colicin Ib, against colicin Ib. The chain is Colicin-Ib immunity protein from Escherichia coli.